A 514-amino-acid chain; its full sequence is Beta-secretase 2 (514 aa).

The signal sequence occupies residues 1–20; that stretch reads MGALLRALLLPLLAQWLLRA. The propeptide occupies 21-62; the sequence is VPVLAPAPFTLPLQVAGAANHRASTVPGLGTPELPRADGLAL. Topologically, residues 21 to 469 are extracellular; the sequence is VPVLAPAPFT…NEPILWIVSY (449 aa). The 338-residue stretch at 88–425 folds into the Peptidase A1 domain; that stretch reads YYLEMLIGTP…DRAQRRVGFA (338 aa). Asp106 is a catalytic residue. N-linked (GlcNAc...) asparagine glycosylation occurs at Asn166. Cystine bridges form between Cys229–Cys429, Cys288–Cys453, and Cys340–Cys389. Residue Asp299 is part of the active site. Asn362 is a glycosylation site (N-linked (GlcNAc...) asparagine). Residues 470 to 490 form a helical membrane-spanning segment; the sequence is ALMSVCGAILLVLILLLLFPL. Over 491–514 the chain is Cytoplasmic; it reads HCRHAPRDPEVVNDESSLVRHRWK.

Belongs to the peptidase A1 family. Monomer. Interacts with RTN3 and RTN4. Post-translationally, undergoes autoproteolytic cleavage. In terms of processing, glycosylated.

It is found in the cell membrane. It localises to the golgi apparatus. The protein resides in the endoplasmic reticulum. The protein localises to the endosome. Its subcellular location is the melanosome. It catalyses the reaction Broad endopeptidase specificity. Cleaves Glu-Val-Asn-Leu-|-Asp-Ala-Glu-Phe in the Swedish variant of Alzheimer's amyloid precursor protein.. Responsible for the proteolytic processing of the amyloid precursor protein (APP). Cleaves APP, between residues 690 and 691, leading to the generation and extracellular release of beta-cleaved soluble APP, and a corresponding cell-associated C-terminal fragment which is later released by gamma-secretase. It has also been shown that it can cleave APP between residues 671 and 672. Involved in the proteolytic shedding of PMEL at early stages of melanosome biogenesis. Cleaves PMEL within the M-beta fragment to release the amyloidogenic PMEL luminal fragment containing M-alpha and a small portion of M-beta N-terminus. This is a prerequisite step for subsequent processing and assembly of PMEL fibrils into amyloid sheets. Responsible also for the proteolytic processing of CLTRN in pancreatic beta cells. The chain is Beta-secretase 2 (Bace2) from Rattus norvegicus (Rat).